The chain runs to 172 residues: Disulfide bond formation protein B (172 aa).

Over 1 to 11 (MNPFRWSFRAQ) the chain is Cytoplasmic. Residues 12–28 (FLLGFLACAGLLAYAIY) traverse the membrane as a helical segment. At 29–46 (VQLHLGLEPCPLCIFQRI) the chain is on the periplasmic side. Residues C38 and C41 are joined by a disulfide bond. The chain crosses the membrane as a helical span at residues 47–63 (AFAALAVFFLIGALHGP). The Cytoplasmic segment spans residues 64–70 (RAAGARK). The chain crosses the membrane as a helical span at residues 71-88 (VYGVLSFIAAGVGMGIGA). At 89 to 145 (RHVWVQIRPKDMMSSCGPPLSFLSETMGPFEVFRTVLTGTGDCGNIDWRFLGLSMPM) the chain is on the periplasmic side. Cysteines 104 and 131 form a disulfide. Residues 146–164 (WSMVWFVGLALWALSAGFK) form a helical membrane-spanning segment. The Cytoplasmic portion of the chain corresponds to 165-172 (ARRSSLHH).

It belongs to the DsbB family.

It localises to the cell inner membrane. Required for disulfide bond formation in some periplasmic proteins. Acts by oxidizing the DsbA protein. This Xanthomonas oryzae pv. oryzae (strain MAFF 311018) protein is Disulfide bond formation protein B.